Reading from the N-terminus, the 429-residue chain is Adenylosuccinate synthetase (429 aa).

GTP-binding positions include 12–18 (GDEGKGK) and 40–42 (GHT). The active-site Proton acceptor is aspartate 13. Mg(2+) is bound by residues aspartate 13 and glycine 40. Residues 13-16 (DEGK), 38-41 (NAGH), threonine 128, arginine 142, glutamine 223, threonine 238, and arginine 302 contribute to the IMP site. The active-site Proton donor is the histidine 41. 298–304 (VNTGRPR) contributes to the substrate binding site. GTP contacts are provided by residues arginine 304, 330–332 (KLD), and 412–414 (GVG).

This sequence belongs to the adenylosuccinate synthetase family. In terms of assembly, homodimer. Requires Mg(2+) as cofactor.

It is found in the cytoplasm. The enzyme catalyses IMP + L-aspartate + GTP = N(6)-(1,2-dicarboxyethyl)-AMP + GDP + phosphate + 2 H(+). It functions in the pathway purine metabolism; AMP biosynthesis via de novo pathway; AMP from IMP: step 1/2. Plays an important role in the de novo pathway of purine nucleotide biosynthesis. Catalyzes the first committed step in the biosynthesis of AMP from IMP. This is Adenylosuccinate synthetase from Paenarthrobacter aurescens (strain TC1).